The sequence spans 1267 residues: Eukaryotic translation initiation factor 3 subunit A (1267 aa).

A coiled-coil region spans residues 82–118 (NIKSLEDVVRAYLKLAEEKTETAKEESQQMVLDIEDL). The 184-residue stretch at 315 to 498 (MQRMSTRVLL…RTLSFGSDLN (184 aa)) folds into the PCI domain. Composition is skewed to basic and acidic residues over residues 792 to 835 (EERK…LEQE), 844 to 1086 (YQER…DSRP), and 1098 to 1147 (WRER…EGSA). Residues 792–1267 (EERKKQRKED…DDDGWTTVRR (476 aa)) are disordered. 3 consecutive repeat copies span residues 956–965 (DDDRGPRRGG), 966–975 (DDERPPRRGF), and 976–985 (DDDRGTRRGF). The tract at residues 956–1073 (DDDRGPRRGG…DDERGGRRGM (118 aa)) is 12 X 10 AA approximate tandem repeats of D-[DE]-[DE]-R-[GP]-[GPQT]-R-R-[GPS]-[ADFGIM]. One copy of the 4; truncated repeat lies at 986-994 (DDDRGQRRG). A run of 2 repeats spans residues 995-1004 (DDDRGPRRGM) and 1005-1014 (DDDRGPRRPI). The stretch at 1015-1023 (DDDRGPRRS) is one 7; truncated repeat. A run of 2 repeats spans residues 1024–1033 (DDDRGPRRGF) and 1034–1043 (DDDRGPRRGM). The 10; approximate repeat unit spans residues 1044–1053 (DEPRGPRRGA). Copy 11 of the repeat occupies 1054–1063 (DDDWGPRRGG). Residues 1064-1073 (DDERGGRRGM) form a 12; approximate repeat. Over residues 1150–1159 (RGGGGGGGGE) the composition is skewed to gly residues. The segment covering 1162 to 1256 (SSWRDSRRED…KENPRRTKNE (95 aa)) has biased composition (basic and acidic residues).

The protein belongs to the eIF-3 subunit A family. Component of the eukaryotic translation initiation factor 3 (eIF-3) complex, which is composed of 13 subunits: eif3a, eif3b, eif3c, eif3d, eif3e, eif3f, eif3g, eif3h, eif3i, eif3j, eif3k, eif3l and eif3m.

Its subcellular location is the cytoplasm. Its function is as follows. RNA-binding component of the eukaryotic translation initiation factor 3 (eIF-3) complex, which is involved in protein synthesis of a specialized repertoire of mRNAs and, together with other initiation factors, stimulates binding of mRNA and methionyl-tRNAi to the 40S ribosome. The eIF-3 complex specifically targets and initiates translation of a subset of mRNAs involved in cell proliferation. This is Eukaryotic translation initiation factor 3 subunit A (eif3a) from Danio rerio (Zebrafish).